A 621-amino-acid chain; its full sequence is tRNA uridine 5-carboxymethylaminomethyl modification enzyme MnmG (621 aa).

G8–G13 is an FAD binding site. Residue G269–F283 coordinates NAD(+).

It belongs to the MnmG family. In terms of assembly, homodimer. Heterotetramer of two MnmE and two MnmG subunits. Requires FAD as cofactor.

The protein resides in the cytoplasm. Functionally, NAD-binding protein involved in the addition of a carboxymethylaminomethyl (cmnm) group at the wobble position (U34) of certain tRNAs, forming tRNA-cmnm(5)s(2)U34. The polypeptide is tRNA uridine 5-carboxymethylaminomethyl modification enzyme MnmG (Chlorobium chlorochromatii (strain CaD3)).